The sequence spans 272 residues: 2-succinyl-6-hydroxy-2,4-cyclohexadiene-1-carboxylate synthase (272 aa).

It belongs to the AB hydrolase superfamily. MenH family. As to quaternary structure, monomer.

The enzyme catalyses 5-enolpyruvoyl-6-hydroxy-2-succinyl-cyclohex-3-ene-1-carboxylate = (1R,6R)-6-hydroxy-2-succinyl-cyclohexa-2,4-diene-1-carboxylate + pyruvate. The protein operates within quinol/quinone metabolism; 1,4-dihydroxy-2-naphthoate biosynthesis; 1,4-dihydroxy-2-naphthoate from chorismate: step 3/7. It functions in the pathway quinol/quinone metabolism; menaquinone biosynthesis. In terms of biological role, catalyzes a proton abstraction reaction that results in 2,5-elimination of pyruvate from 2-succinyl-5-enolpyruvyl-6-hydroxy-3-cyclohexene-1-carboxylate (SEPHCHC) and the formation of 2-succinyl-6-hydroxy-2,4-cyclohexadiene-1-carboxylate (SHCHC). The chain is 2-succinyl-6-hydroxy-2,4-cyclohexadiene-1-carboxylate synthase from Yersinia pestis (strain Pestoides F).